A 374-amino-acid chain; its full sequence is MEFCLAQPCPQGNHEATSSTFNTFQPMNLTQGRCQNLSCGSRPSMQVMKEQGVQLSPRTNHTVVSASAPGTAWVLGNADRAEEVPGKGDLSLQAETRAWVQKTQAHWLLLKTAPLWFHGFITRREAERLLQPQPLGCYLVRFSESAVTFVLSYRSQTCCRHFLLAQLGDGRHVVLGEDSAHAQLQDLLEHYTECPLSPYGEILTQPLARQTAEPAGLSLRADSDSGSKRQDPDTQLSLLLQQGQAQASGHTEKVWASQQKATSQASRPRPPIPAKPQLPPEVYTSPASRLHQAPPINPIYQEPDEPIAFYAMGRGSPGDAPSNIYAEVEGPSGTAPIGHPILRKCWSRPISRGQVREVQGKISSRSRAERGSPS.

One can recognise an SH2 domain in the interval 116 to 207 (WFHGFITRRE…PYGEILTQPL (92 aa)). The segment at 213 to 232 (EPAGLSLRADSDSGSKRQDP) is disordered. Over residues 221–232 (ADSDSGSKRQDP) the composition is skewed to basic and acidic residues. Phosphoserine is present on Ser-237. The disordered stretch occupies residues 241-301 (QQGQAQASGH…QAPPINPIYQ (61 aa)). The span at 256–266 (ASQQKATSQAS) shows a compositional bias: polar residues. The SH3-binding motif lies at 267–273 (RPRPPIP). Over residues 268 to 279 (PRPPIPAKPQLP) the composition is skewed to pro residues. Ser-316 carries the post-translational modification Phosphoserine. Disordered stretches follow at residues 321–340 (PSNI…IGHP) and 353–374 (GQVR…GSPS).

Interacts with KDR. Interacts with p56-LCK, TXK and ITK. In terms of processing, phosphorylated on tyrosine residues upon TCR-stimulation. As to expression, expression limited to tissues of the immune system and, in particular, activated T-cells and natural killer cells. Expressed in the thymus, lymph node, and to a lesser extent, in the spleen and bone marrow. According to PubMed:10553045, also expressed in the lung.

It is found in the cytoplasm. Its subcellular location is the cell membrane. In terms of biological role, could be a T-cell-specific adapter protein involved in the control of T-cell activation. May play a role in p56-LCK-mediated T-cell signaling. Could be involved in the regulation of responses to T-cell activation stimuli, specifically proliferation and lymphokine production. Interactions with ITK and TXK may provide important biochemical links of these two important kinases with other components in the T-cell activation machinery. The protein is SH2 domain-containing protein 2A (Sh2d2a) of Mus musculus (Mouse).